A 365-amino-acid chain; its full sequence is tRNA(Met) cytidine acetate ligase (365 aa).

Residues 7 to 20 (IAEFNPFHNGHKYL), Gly96, Asn152, and Arg175 contribute to the ATP site.

Belongs to the TmcAL family.

It is found in the cytoplasm. It carries out the reaction cytidine(34) in elongator tRNA(Met) + acetate + ATP = N(4)-acetylcytidine(34) in elongator tRNA(Met) + AMP + diphosphate. Its function is as follows. Catalyzes the formation of N(4)-acetylcytidine (ac(4)C) at the wobble position of elongator tRNA(Met), using acetate and ATP as substrates. First activates an acetate ion to form acetyladenylate (Ac-AMP) and then transfers the acetyl group to tRNA to form ac(4)C34. The protein is tRNA(Met) cytidine acetate ligase of Streptococcus pneumoniae (strain JJA).